A 337-amino-acid chain; its full sequence is Adenosine deaminase-like protein (337 aa).

H14 and H16 together coordinate Zn(2+). N(6)-methyl-AMP is bound by residues H16, N18, H66, T98 to K101, and G171. Residue H198 participates in Zn(2+) binding. 3 residues coordinate N(6)-methyl-AMP: E201, D276, and D277. The active-site Proton donor is the E201. Residue D276 coordinates Zn(2+).

The protein belongs to the metallo-dependent hydrolases superfamily. Adenosine and AMP deaminases family. As to quaternary structure, monomer. It depends on Zn(2+) as a cofactor.

It catalyses the reaction N(6)-methyl-AMP + H2O + H(+) = IMP + methylamine. Catalyzes the hydrolysis of the free cytosolic methylated adenosine nucleotide N(6)-methyl-AMP (N6-mAMP) to produce inositol monophosphate (IMP) and methylamine. Is required for the catabolism of cytosolic N6-mAMP, which is derived from the degradation of mRNA containing N6-methylated adenine (m6A). The sequence is that of Adenosine deaminase-like protein (Ada) from Drosophila melanogaster (Fruit fly).